The sequence spans 347 residues: NADH-ubiquinone oxidoreductase chain 2 (347 aa).

Helical transmembrane passes span 1-21, 25-45, 59-79, 96-116, 127-147, 149-169, 178-198, 200-220, 237-257, 276-296, and 325-345; these read MNPLIFSTILATIIMGTVIVM, HWLTIWIGFEMNMLAIIPMLM, YFLTQATASMLLMLAVIINLT, IIMTIALTMKLGLSPFHFWVP, CLILLTWQKLAPLSILYMISP, INLNLLLSMSLISIAIGGWGG, IMAYSSIAHMGWMTAVLAYNP, MTMLNLLVYITMTTTMFMLLI, IPLVTTLTLTIMLSLGGLPPL, IILPTLMAIMALLSLYFYMRL, and LLSPLIVTSTLTLPLAPTMLL.

This sequence belongs to the complex I subunit 2 family. As to quaternary structure, core subunit of respiratory chain NADH dehydrogenase (Complex I) which is composed of 45 different subunits. Interacts with TMEM242.

The protein resides in the mitochondrion inner membrane. The enzyme catalyses a ubiquinone + NADH + 5 H(+)(in) = a ubiquinol + NAD(+) + 4 H(+)(out). Its function is as follows. Core subunit of the mitochondrial membrane respiratory chain NADH dehydrogenase (Complex I) which catalyzes electron transfer from NADH through the respiratory chain, using ubiquinone as an electron acceptor. Essential for the catalytic activity and assembly of complex I. This Natalus tumidirostris (Trinidadian funnel-eared bat) protein is NADH-ubiquinone oxidoreductase chain 2.